Here is a 288-residue protein sequence, read N- to C-terminus: Polyamine aminopropyltransferase (288 aa).

Residues 9-238 enclose the PABS domain; it reads ETLHDQFGQY…GIMTFAWATD (230 aa). Position 33 (Gln-33) interacts with S-methyl-5'-thioadenosine. Residues His-64 and Asp-88 each coordinate spermidine. S-methyl-5'-thioadenosine-binding positions include Glu-108 and 140-141; that span reads DG. Asp-158 serves as the catalytic Proton acceptor. Spermidine is bound at residue 158 to 161; it reads DCTD. Residue Pro-165 participates in S-methyl-5'-thioadenosine binding.

The protein belongs to the spermidine/spermine synthase family. Homodimer or homotetramer.

It is found in the cytoplasm. It catalyses the reaction S-adenosyl 3-(methylsulfanyl)propylamine + putrescine = S-methyl-5'-thioadenosine + spermidine + H(+). Its pathway is amine and polyamine biosynthesis; spermidine biosynthesis; spermidine from putrescine: step 1/1. Catalyzes the irreversible transfer of a propylamine group from the amino donor S-adenosylmethioninamine (decarboxy-AdoMet) to putrescine (1,4-diaminobutane) to yield spermidine. The chain is Polyamine aminopropyltransferase from Escherichia coli O81 (strain ED1a).